Reading from the N-terminus, the 122-residue chain is uncharacterized protein (122 aa).

Transmembrane regions (helical) follow at residues 14-34 (WLWI…FNNV) and 83-103 (IIGV…YFII).

Its subcellular location is the cell membrane. This is an uncharacterized protein from Ureaplasma parvum serovar 3 (strain ATCC 700970).